The following is a 445-amino-acid chain: Methionine aminopeptidase 2 (445 aa).

The tract at residues 1-76 (MAAQVASGVG…KKKCTSKVQT (76 aa)) is disordered. A compositionally biased stretch (basic residues) spans 57–71 (AKKKKKKTKKKKKCT). His195 contacts substrate. Residues Asp215, Asp226, and His295 each contribute to the a divalent metal cation site. Position 303 (His303) interacts with substrate. A divalent metal cation contacts are provided by Glu331 and Glu426.

It belongs to the peptidase M24A family. Methionine aminopeptidase eukaryotic type 2 subfamily. It depends on Co(2+) as a cofactor. Zn(2+) is required as a cofactor. Mn(2+) serves as cofactor. Requires Fe(2+) as cofactor.

Its subcellular location is the cytoplasm. It carries out the reaction Release of N-terminal amino acids, preferentially methionine, from peptides and arylamides.. Its function is as follows. Cotranslationally removes the N-terminal methionine from nascent proteins. The N-terminal methionine is often cleaved when the second residue in the primary sequence is small and uncharged (Met-Ala-, Cys, Gly, Pro, Ser, Thr, or Val). This is Methionine aminopeptidase 2 from Paracoccidioides lutzii (strain ATCC MYA-826 / Pb01) (Paracoccidioides brasiliensis).